A 784-amino-acid chain; its full sequence is Toll-like receptor 2 (784 aa).

The first 20 residues, 1-20 (MPRALWTAWVWAXIILSTEG), serve as a signal peptide directing secretion. Residues 21–587 (ASDQASSLSC…ARLSLSECHR (567 aa)) lie on the Extracellular side of the membrane. Cys-30 and Cys-36 are joined by a disulfide. LRR repeat units lie at residues 54 to 77 (VKSL…RCVN), 78 to 101 (LKTL…HLRN), 102 to 125 (LEYL…SLYV), 126 to 150 (LKFL…HLPN), 151 to 175 (LXTL…GLTF), 176 to 199 (LEEL…SIQN), 200 to 223 (ISHL…IVSS), 224 to 250 (LDCL…MSTS), 251 to 278 (VKKL…YVSG), 279 to 308 (ILEV…HLGN), 309 to 337 (VETL…LTGK), 338 to 361 (VKRV…HLKS), 362 to 388 (LEYL…AWPF), 389 to 414 (LQTL…TLEN), 415 to 437 (LNSL…WPGK), 438 to 457 (MKQL…CLPQ), 458 to 478 (TLEI…ILPQ), 479 to 500 (LKEL…FLPV), and 501 to 524 (LSVM…SFQQ). Residue Asn-114 is glycosylated (N-linked (GlcNAc...) asparagine). Asn-199 is a glycosylation site (N-linked (GlcNAc...) asparagine). Cysteines 353 and 382 form a disulfide. The cysteines at positions 432 and 454 are disulfide-linked. The N-linked (GlcNAc...) asparagine glycan is linked to Asn-442. The 55-residue stretch at 525–579 (LKTLEAGGNNFICSCDFLSFTQGQQALGRVLVDWPDDYRCDSPSHVRGQRVQDAR) folds into the LRRCT domain. Residues 588–608 (AAVVSAACCALFLVLLLTGVL) form a helical membrane-spanning segment. The Cytoplasmic portion of the chain corresponds to 609–784 (CHRFHGLWYM…WLNLRAAIRS (176 aa)). The TIR domain occupies 639 to 782 (ICYDAFVSYS…GFWLNLRAAI (144 aa)). Lys-754 is covalently cross-linked (Glycyl lysine isopeptide (Lys-Gly) (interchain with G-Cter in ubiquitin)). Residues 761–778 (YLEWPVDETQQEGFWLNL) carry the ATG16L1-binding motif motif.

This sequence belongs to the Toll-like receptor family. In terms of assembly, interacts with LY96, TLR1 and TLR6 (via extracellular domain). TLR2 seems to exist in heterodimers with either TLR1 or TLR6 before stimulation by the ligand. The heterodimers form bigger oligomers in response to their corresponding ligands as well as further heterotypic associations with other receptors such as CD14 and/or CD36. Binds MYD88 (via TIR domain). Interacts with TICAM1. Interacts with CNPY3. Interacts with ATG16L1. Interacts with PPP1R11. Interacts with TICAM2. Interacts with TIRAP. Ubiquitinated at Lys-754 by PPP1R11, leading to its degradation. Deubiquitinated by USP2. Post-translationally, glycosylation of Asn-442 is critical for secretion of the N-terminal ectodomain of TLR2.

The protein resides in the membrane. Its subcellular location is the cytoplasmic vesicle. The protein localises to the phagosome membrane. It is found in the membrane raft. Its function is as follows. Cooperates with LY96 to mediate the innate immune response to bacterial lipoproteins and other microbial cell wall components. Cooperates with TLR1 or TLR6 to mediate the innate immune response to bacterial lipoproteins or lipopeptides. Acts via MYD88 and TRAF6, leading to NF-kappa-B activation, cytokine secretion and the inflammatory response. May also promote apoptosis in response to lipoproteins. Forms activation clusters composed of several receptors depending on the ligand, these clusters trigger signaling from the cell surface and subsequently are targeted to the Golgi in a lipid-raft dependent pathway. Forms the cluster TLR2:TLR6:CD14:CD36 in response to diacylated lipopeptides and TLR2:TLR1:CD14 in response to triacylated lipopeptides. The sequence is that of Toll-like receptor 2 (TLR2) from Bison bison (American bison).